We begin with the raw amino-acid sequence, 527 residues long: Phosphoenolpyruvate carboxykinase (ATP) (527 aa).

3 residues coordinate substrate: R56, Y191, and K197. Residues K197, H216, and 232-240 (GLSGTGKTT) contribute to the ATP site. The Mn(2+) site is built by K197 and H216. D253 is a binding site for Mn(2+). Residues E281, R318, 437 to 438 (RI), and T443 each bind ATP. R318 contributes to the substrate binding site.

It belongs to the phosphoenolpyruvate carboxykinase (ATP) family. Mn(2+) is required as a cofactor.

It is found in the cytoplasm. It catalyses the reaction oxaloacetate + ATP = phosphoenolpyruvate + ADP + CO2. The protein operates within carbohydrate biosynthesis; gluconeogenesis. Its function is as follows. Involved in the gluconeogenesis. Catalyzes the conversion of oxaloacetate (OAA) to phosphoenolpyruvate (PEP) through direct phosphoryl transfer between the nucleoside triphosphate and OAA. The polypeptide is Phosphoenolpyruvate carboxykinase (ATP) (Shouchella clausii (strain KSM-K16) (Alkalihalobacillus clausii)).